Here is a 314-residue protein sequence, read N- to C-terminus: Putative lipoprotein LppW (314 aa).

An N-terminal signal peptide occupies residues 1–22 (MRARPLTLLTALAAVTLVVVAG). Residue Cys-23 is the site of N-palmitoyl cysteine attachment. Cys-23 carries the S-diacylglycerol cysteine lipid modification.

The protein resides in the cell membrane. The polypeptide is Putative lipoprotein LppW (lppW) (Mycobacterium bovis (strain ATCC BAA-935 / AF2122/97)).